Consider the following 108-residue polypeptide: uncharacterized protein (108 aa).

This sequence to M.jannaschii MJ1245 and M.thermoautotrophicum MTH1110.

This is an uncharacterized protein from Methanocaldococcus jannaschii (strain ATCC 43067 / DSM 2661 / JAL-1 / JCM 10045 / NBRC 100440) (Methanococcus jannaschii).